We begin with the raw amino-acid sequence, 330 residues long: G-protein coupled receptor 157 (330 aa).

At 1-15 (MPTPAPPTELLPWER) the chain is on the extracellular side. Residues 16 to 36 (AVVLLSCVLSALGSGLLVATH) form a helical membrane-spanning segment. The Cytoplasmic segment spans residues 37 to 48 (ALWPDLRSRARR). Residues 49-69 (LLLFLSLADLLSAASYFYGVL) form a helical membrane-spanning segment. Residues 70-87 (QDFAGTSWDCVLQGALST) are Extracellular-facing. A helical transmembrane segment spans residues 88-108 (FANTSSFFWTVAIALYLYLNI). Residues 109-119 (VRATRGPCTDH) lie on the Cytoplasmic side of the membrane. Residues 120–140 (LVWAFHLISWGVPLAITVAAV) traverse the membrane as a helical segment. Residues 141–166 (CLKKIGYDASDVSVGWCWINLEAEDR) are Extracellular-facing. A helical membrane pass occupies residues 167–187 (VLWMLLTGKLWEMLAYILLPL). At 188–227 (LYLLVRKHINRAHQALSEYRPIWEGRQLQRGSPTSMADKK) the chain is on the cytoplasmic side. Residues 228 to 250 (LILIPFIFICLRVWSTVRFVLTL) traverse the membrane as a helical segment. Over 251–259 (CGSPVVQAP) the chain is Extracellular. Residues 260–282 (VLVVLHGIGNTFQGGANCIMFVL) form a helical membrane-spanning segment. The Cytoplasmic portion of the chain corresponds to 283-330 (CTRAVRTRLFSLCCCYPRPPTQNPPGASIPPKMGESQESRRTPEVPST). Positions 303-330 (TQNPPGASIPPKMGESQESRRTPEVPST) are disordered. Residues 317–330 (ESQESRRTPEVPST) show a composition bias toward basic and acidic residues.

This sequence belongs to the G-protein coupled receptor 2 family.

The protein localises to the cell projection. It localises to the cilium membrane. In terms of biological role, orphan receptor that promotes neuronal differentiation of radial glial progenitors (RGPs). The activity of this receptor is mediated by a G(q)-protein that activates a phosphatidylinositol-calcium second messenger. The sequence is that of G-protein coupled receptor 157 (Gpr157) from Rattus norvegicus (Rat).